A 264-amino-acid chain; its full sequence is S-adenosylmethionine decarboxylase proenzyme (264 aa).

Residue serine 113 is the Schiff-base intermediate with substrate; via pyruvic acid of the active site. The residue at position 113 (serine 113) is a Pyruvic acid (Ser); by autocatalysis. Histidine 118 acts as the Proton acceptor; for processing activity in catalysis. The active-site Proton donor; for catalytic activity is cysteine 141.

This sequence belongs to the prokaryotic AdoMetDC family. Type 2 subfamily. In terms of assembly, heterooctamer of four alpha and four beta chains arranged as a tetramer of alpha/beta heterodimers. Requires pyruvate as cofactor. In terms of processing, is synthesized initially as an inactive proenzyme. Formation of the active enzyme involves a self-maturation process in which the active site pyruvoyl group is generated from an internal serine residue via an autocatalytic post-translational modification. Two non-identical subunits are generated from the proenzyme in this reaction, and the pyruvate is formed at the N-terminus of the alpha chain, which is derived from the carboxyl end of the proenzyme. The post-translation cleavage follows an unusual pathway, termed non-hydrolytic serinolysis, in which the side chain hydroxyl group of the serine supplies its oxygen atom to form the C-terminus of the beta chain, while the remainder of the serine residue undergoes an oxidative deamination to produce ammonia and the pyruvoyl group blocking the N-terminus of the alpha chain.

It carries out the reaction S-adenosyl-L-methionine + H(+) = S-adenosyl 3-(methylsulfanyl)propylamine + CO2. Its pathway is amine and polyamine biosynthesis; S-adenosylmethioninamine biosynthesis; S-adenosylmethioninamine from S-adenosyl-L-methionine: step 1/1. In terms of biological role, catalyzes the decarboxylation of S-adenosylmethionine to S-adenosylmethioninamine (dcAdoMet), the propylamine donor required for the synthesis of the polyamines spermine and spermidine from the diamine putrescine. This chain is S-adenosylmethionine decarboxylase proenzyme, found in Pseudomonas aeruginosa (strain UCBPP-PA14).